We begin with the raw amino-acid sequence, 721 residues long: Protein mu-NS (721 aa).

The tract at residues 1 to 13 is interaction with sigma-NS; the sequence is MASFKGFSANTVP. The segment at 1–38 is RNA-binding; the sequence is MASFKGFSANTVPVSKAKRDISSLAATPGLRSQSFTPS. An interaction with mu-2 region spans residues 14–40; that stretch reads VSKAKRDISSLAATPGLRSQSFTPSVD. An involved in the formation of factory-like inclusions region spans residues 471-721; the sequence is SNDVTDGIKL…IDFSVPTDEL (251 aa). 2 coiled-coil regions span residues 522–559 and 628–684; these read PLLS…KSAQ and LMNG…ALNQ.

The protein belongs to the orthoreovirus mu-NS protein family. As to quaternary structure, interacts with mu-2. Interacts with sigma-NS; in viral factories. Interacts with the inner capsid proteins lambda-1 and sigma-2, and outer capsid protein lambda-2; in viral factories. In terms of processing, the N-terminus is blocked.

Its subcellular location is the host cytoplasm. Its function is as follows. Non-structural protein implicated with protein sigma-NS in forming the matrix of viral factories, which are large inclusions in the host cytoplasm where replication intermediates are assembled and viral RNA replication takes place. Together with mu-2, recruits the other core proteins to these factories. Binds RNA and recruits viral mRNAs to sites of viral replication. This is Protein mu-NS (M3) from Reovirus type 3 (strain Dearing) (T3D).